The sequence spans 308 residues: Ribosomal RNA small subunit methyltransferase H (308 aa).

Residues 32 to 34 (GGH), D52, F78, D100, and Q107 contribute to the S-adenosyl-L-methionine site.

This sequence belongs to the methyltransferase superfamily. RsmH family.

The protein localises to the cytoplasm. The catalysed reaction is cytidine(1402) in 16S rRNA + S-adenosyl-L-methionine = N(4)-methylcytidine(1402) in 16S rRNA + S-adenosyl-L-homocysteine + H(+). Functionally, specifically methylates the N4 position of cytidine in position 1402 (C1402) of 16S rRNA. The chain is Ribosomal RNA small subunit methyltransferase H from Legionella pneumophila (strain Paris).